We begin with the raw amino-acid sequence, 401 residues long: S-adenosylmethionine synthase (401 aa).

135–140 (GHGSGD) lines the ATP pocket.

It belongs to the AdoMet synthase 2 family. Requires Mg(2+) as cofactor.

It catalyses the reaction L-methionine + ATP + H2O = S-adenosyl-L-methionine + phosphate + diphosphate. The protein operates within amino-acid biosynthesis; S-adenosyl-L-methionine biosynthesis; S-adenosyl-L-methionine from L-methionine: step 1/1. Functionally, catalyzes the formation of S-adenosylmethionine from methionine and ATP. The chain is S-adenosylmethionine synthase from Methanobrevibacter smithii (strain ATCC 35061 / DSM 861 / OCM 144 / PS).